Consider the following 217-residue polypeptide: MOB kinase activator 3A (217 aa).

Zn(2+) is bound by residues Cys83, Cys88, His165, and His170.

Belongs to the MOB1/phocein family.

In terms of biological role, may regulate the activity of kinases. This chain is MOB kinase activator 3A (Mob3a), found in Mus musculus (Mouse).